The primary structure comprises 276 residues: ATP synthase subunit a (276 aa).

The next 7 membrane-spanning stretches (helical) occupy residues 49–69 (KPML…FAAA), 109–129 (YLFT…IPFI), 137–157 (SGMV…AGIS), 173–193 (GIRG…NILV), 203–223 (FANM…GEYI), 232–252 (APVG…EMLI), and 253–273 (QFLQ…GAVA).

It belongs to the ATPase A chain family. In terms of assembly, F-type ATPases have 2 components, CF(1) - the catalytic core - and CF(0) - the membrane proton channel. CF(1) has five subunits: alpha(3), beta(3), gamma(1), delta(1), epsilon(1). CF(0) has three main subunits: a(1), b(2) and c(9-12). The alpha and beta chains form an alternating ring which encloses part of the gamma chain. CF(1) is attached to CF(0) by a central stalk formed by the gamma and epsilon chains, while a peripheral stalk is formed by the delta and b chains.

It is found in the cell membrane. Key component of the proton channel; it plays a direct role in the translocation of protons across the membrane. The chain is ATP synthase subunit a from Nocardioides sp. (strain ATCC BAA-499 / JS614).